An 858-amino-acid chain; its full sequence is Protein 4.1 (858 aa).

A disordered region spans residues 1–125 (MTTEKSLAAE…KEIELGNSLD (125 aa)). Phosphoserine is present on Ser-14. The segment covering 31–50 (QQETQLEEASQAAAAEGSDQ) has biased composition (low complexity). Thr-62 bears the Phosphothreonine mark. Positions 63 to 77 (PTHEDLTKNKERTSE) are enriched in basic and acidic residues. The span at 78-89 (SRGLSRLLSSFL) shows a compositional bias: low complexity. Phosphoserine is present on residues Ser-86, Ser-87, Ser-97, Ser-106, Ser-123, Ser-151, Ser-153, and Ser-154. Positions 103–119 (EVESEKEKGEGGQKEIE) are enriched in basic and acidic residues. The disordered stretch occupies residues 155–208 (IETQPAQEEHREDPDSETKEGEGIEECSGTEVKEDPESRAEREPEASQKPVRRH). 2 stretches are compositionally biased toward basic and acidic residues: residues 161–176 (QEEH…KEGE) and 185–200 (EVKE…EPEA). At Ser-192 the chain carries Phosphoserine. An FERM domain is found at 211–492 (MHCKVSLLDD…EHHTFFRLTS (282 aa)). Tyr-223 is modified (phosphotyrosine). Residue Thr-379 is modified to Phosphothreonine. Residues 495-608 (TIPKSKFLAL…PAEPEPTEAW (114 aa)) are hydrophilic. Residues 518–636 (TRQASALIDR…TQKLAGKGED (119 aa)) are disordered. Ser-522, Ser-541, Ser-543, and Ser-556 each carry phosphoserine. 2 stretches are compositionally biased toward basic and acidic residues: residues 581–595 (TPKE…RGEE) and 606–615 (EAWKVEKTHT). A spectrin--actin-binding region spans residues 609-707 (KVEKTHTEVT…WDKRLSTHSP (99 aa)). Residues 616 to 629 (EVTVPTSNGDQTQK) are compositionally biased toward polar residues. At Tyr-654 the chain carries Phosphotyrosine. 5 positions are modified to phosphoserine: Ser-658, Ser-668, Ser-678, Ser-703, and Ser-706. Positions 710-858 (TLNINGQVPT…VHQETEISEE (149 aa)) are C-terminal (CTD). A phosphothreonine mark is found at Thr-730 and Thr-853.

As to quaternary structure, binds with a high affinity to glycophorin and with lower affinity to band III protein. Associates with the nuclear mitotic apparatus. Binds calmodulin, CPAP and DLG1. Also found to associate with contractile apparatus and tight junctions. Interacts with NUMA1; this interaction is negatively regulated by CDK1 during metaphase and promotes anaphase-specific localization of NUMA1 in symmetrically dividing cells. Interacts with ATP2B1; regulates small intestinal calcium absorption through regulation of membrane expression of ATP2B1. Post-translationally, O-glycosylated; contains N-acetylglucosamine side chains in the C-terminal domain. Phosphorylated at multiple sites by different protein kinases and each phosphorylation event selectively modulates the protein's functions. In terms of processing, phosphorylation on Tyr-654 reduces the ability of 4.1 to promote the assembly of the spectrin/actin/4.1 ternary complex.

The protein localises to the nucleus. It is found in the cytoplasm. The protein resides in the cytoskeleton. It localises to the cell cortex. In terms of biological role, protein 4.1 is a major structural element of the erythrocyte membrane skeleton. It plays a key role in regulating membrane physical properties of mechanical stability and deformability by stabilizing spectrin-actin interaction. Recruits DLG1 to membranes. Required for dynein-dynactin complex and NUMA1 recruitment at the mitotic cell cortex during anaphase. The chain is Protein 4.1 from Mus musculus (Mouse).